Reading from the N-terminus, the 338-residue chain is N-acetylmuramate/N-acetylglucosamine kinase (338 aa).

This sequence belongs to the kinase AmgK family.

It carries out the reaction N-acetyl-D-muramate + ATP = N-acetyl-alpha-D-muramate 1-phosphate + ADP + H(+). The enzyme catalyses N-acetyl-D-glucosamine + ATP = N-acetyl-alpha-D-glucosamine 1-phosphate + ADP + H(+). It participates in cell wall biogenesis; peptidoglycan recycling. Its function is as follows. Sugar kinase that catalyzes the ATP-dependent phosphorylation of N-acetylmuramate (MurNAc) and N-acetylglucosamine (GlcNAc) at its C1 hydroxyl group, leading to MurNAc alpha-1P and GlcNAc alpha-1P, respectively. Is involved in peptidoglycan recycling as part of a cell wall recycling pathway that bypasses de novo biosynthesis of the peptidoglycan precursor UDP-MurNAc. Plays a role in intrinsic resistance to fosfomycin, which targets the de novo synthesis of UDP-MurNAc. This is N-acetylmuramate/N-acetylglucosamine kinase from Pseudomonas aeruginosa (strain ATCC 15692 / DSM 22644 / CIP 104116 / JCM 14847 / LMG 12228 / 1C / PRS 101 / PAO1).